We begin with the raw amino-acid sequence, 118 residues long: C-type natriuretic peptide 2 (118 aa).

Residues 1 to 22 (MHFCHIVGWGLVLAVLYLRTEA) form the signal peptide. Positions 23–96 (KPVAQAHQKS…SRKIKGINKK (74 aa)) are excised as a propeptide. Cysteines 102 and 118 form a disulfide.

Belongs to the natriuretic peptide family.

Its subcellular location is the secreted. Its function is as follows. Exhibits natriuretic and vasodepressor activity. Has a cGMP-stimulating activity. This is C-type natriuretic peptide 2 from Aquarana catesbeiana (American bullfrog).